Here is a 131-residue protein sequence, read N- to C-terminus: Ribosomally synthesized cyclic peptide phomopsin precursor gigA (131 aa).

The signal sequence occupies residues 1–18; sequence MQFTLIFFYATLAAFGLA. Propeptides lie at residues 19–38, 48–65, 75–92, 102–119, and 129–131; these read APSEQVGRDVVQEGDELDKR, ADLVDGDDVQEGDKLDKR, ADMVDGDDVQEGDKLDKR, ADMVDGDDVQEGDELAKR, and ADM.

Post-translationally, gigA is processed by several endopeptidases including kexin proteases to produce 2 identical copies of the nonaxapeptide Ile-Asn-Phe-Lys-Ile-Pro-Tyr-Thr-Gly, one copy of the nonaketide Ile-Gly-Phe-Lys-Leu-Pro-Tyr-Arg-Gly and one copy of the nonaketide Pro-Asn-Phe-Lys-Met-Pro-Tyr-Arg-Gly, that are further modified into phomapsins B, C and A, respectively. After being excised from the precursor peptide, the core peptides are cyclized and modified post-translationally by enzymes encoded within the gene cluster. Epichloecyclin biosynthesis requires only dimethylation of the side-chain amino group of the conserved lysine for completion.

The protein operates within mycotoxin biosynthesis. Ribosomally synthesized cyclic peptide phomopsin precursor; part of the gene cluster that mediates the biosynthesis of the epichloecyclins, a group of nonapeptides, with a likely cyclic structure and dimethylation of the conserved lysine. The gigA translated product contains 4 repeated peptide embedding the nonapeptide Ile-Asn-Phe-Lys-Ile-Pro-Tyr-Thr-Gly in repeats 1 and 2, Ile-Gly-Phe-Lys-Leu-Pro-Tyr-Arg-Gly in repeat 3, and Pro-Asn-Phe-Lys-Met-Pro-Tyr-Arg-Gly in repeat 4 that are converted into epichloecyclins B, C and A, respectively. Moreover, removal of the last Gly residue in epichloecyclins B and C leads to epichloecyclins D and E, respectively. The sequence is that of Ribosomally synthesized cyclic peptide phomopsin precursor gigA (nc25) from Epichloe festucae (strain Fl1).